The chain runs to 499 residues: ADP,ATP carrier protein 5 (499 aa).

The next 11 membrane-spanning stretches (helical) occupy residues 25 to 45 (LGKF…QNVL), 61 to 81 (IAGF…VIIY), 93 to 113 (IFYY…FVIY), 148 to 168 (YIVY…LLFW), 183 to 203 (FYTL…FLMM), 223 to 243 (ITLV…CCLL), 286 to 306 (LWLL…VEAV), 327 to 347 (LYIL…NNIM), 356 to 376 (AVIS…LIVF), 380 to 400 (ILSL…VSIG), and 468 to 488 (LISP…IYAV).

The protein belongs to the ADP/ATP translocase tlc family.

The protein resides in the cell membrane. Its function is as follows. Provides the rickettsial cell with host ATP in exchange for rickettsial ADP. This is an obligate exchange system. This energy acquiring activity is an important component of rickettsial parasitism. The polypeptide is ADP,ATP carrier protein 5 (tlcE) (Rickettsia conorii (strain ATCC VR-613 / Malish 7)).